The primary structure comprises 810 residues: Bifunctional aspartokinase/homoserine dehydrogenase 2 (810 aa).

The segment at 2-252 is aspartokinase; it reads SVIAQAGAKG…VKDACLLPLL (251 aa). Residues 253–463 form an interface region; sequence RLDEASELAR…RAEKRIGLVL (211 aa). The interval 464-810 is homoserine dehydrogenase; sequence FGKGNIGSRW…SDINRLAQLL (347 aa). Positions 468 and 469 each coordinate NADP(+). The NAD(+) site is built by isoleucine 469 and valine 498. Position 469 (isoleucine 469) interacts with NADPH. Residues arginine 501, threonine 549, and lysine 573 each contribute to the NADP(+) site. Threonine 549 contributes to the NAD(+) binding site. Positions 549 and 573 each coordinate NADPH. Na(+)-binding residues include valine 603, alanine 605, and leucine 607. Residues glycine 658 and glutamate 661 each coordinate NADP(+). Positions 661 and 672 each coordinate L-homoserine. Lysine 676 (proton donor) is an active-site residue. An NADP(+)-binding site is contributed by glycine 791. Residue glycine 791 coordinates NAD(+). Glycine 791 provides a ligand contact to NADPH.

It in the N-terminal section; belongs to the aspartokinase family. The protein in the C-terminal section; belongs to the homoserine dehydrogenase family. In terms of assembly, homotetramer. Requires a metal cation as cofactor.

It catalyses the reaction L-homoserine + NADP(+) = L-aspartate 4-semialdehyde + NADPH + H(+). The enzyme catalyses L-homoserine + NAD(+) = L-aspartate 4-semialdehyde + NADH + H(+). It carries out the reaction L-aspartate + ATP = 4-phospho-L-aspartate + ADP. Its pathway is amino-acid biosynthesis; L-lysine biosynthesis via DAP pathway; (S)-tetrahydrodipicolinate from L-aspartate: step 1/4. The protein operates within amino-acid biosynthesis; L-methionine biosynthesis via de novo pathway; L-homoserine from L-aspartate: step 1/3. It functions in the pathway amino-acid biosynthesis; L-methionine biosynthesis via de novo pathway; L-homoserine from L-aspartate: step 3/3. It participates in amino-acid biosynthesis; L-threonine biosynthesis; L-threonine from L-aspartate: step 1/5. Its pathway is amino-acid biosynthesis; L-threonine biosynthesis; L-threonine from L-aspartate: step 3/5. Its function is as follows. Bifunctional aspartate kinase and homoserine dehydrogenase that catalyzes the first and the third steps toward the synthesis of lysine, methionine and threonine from aspartate. The chain is Bifunctional aspartokinase/homoserine dehydrogenase 2 (metL) from Escherichia coli (strain K12).